A 302-amino-acid polypeptide reads, in one-letter code: GTP cyclohydrolase FolE2 (302 aa).

Residues 1 to 27 are disordered; the sequence is MPKKQLPPKEERHKLFGSVPPKERTKP.

It belongs to the GTP cyclohydrolase IV family.

It catalyses the reaction GTP + H2O = 7,8-dihydroneopterin 3'-triphosphate + formate + H(+). Its pathway is cofactor biosynthesis; 7,8-dihydroneopterin triphosphate biosynthesis; 7,8-dihydroneopterin triphosphate from GTP: step 1/1. Functionally, converts GTP to 7,8-dihydroneopterin triphosphate. The chain is GTP cyclohydrolase FolE2 from Oceanobacillus iheyensis (strain DSM 14371 / CIP 107618 / JCM 11309 / KCTC 3954 / HTE831).